We begin with the raw amino-acid sequence, 296 residues long: Dof zinc finger protein DOF3.7 (296 aa).

A disordered region spans residues 41–69 (NTRPNATASNGGSGGNTNNTATMETRKAR). Positions 45–62 (NATASNGGSGGNTNNTAT) are enriched in low complexity. The segment at 74 to 128 (VNCPRCNSTNTKFCYYNNYSLTQPRYFCKGCRRYWTEGGSLRNVPVGGSSRKNKR) adopts a Dof-type zinc-finger fold. Zn(2+)-binding residues include Cys-76, Cys-79, Cys-101, and Cys-104. The interval 115–146 (RNVPVGGSSRKNKRSSTPLASPSNPKLPDLNP) is disordered. Over residues 129–138 (SSTPLASPSN) the composition is skewed to polar residues.

In terms of tissue distribution, expressed in the phloem of the mother plant, including in roots, stem, leaves and flowers, but not present in the seed and embryo. In maturing siliques, found all through the funiculus connecting the placenta to the ovule, but not in the ovule.

The protein resides in the nucleus. Its function is as follows. Transcription factor specifically involved in the maternal control of seed germination. Regulates transcription by binding to a 5'-AA[AG]G-3' consensus core sequence. May ensure the inactivity of a component that would be activated to trigger germination as a consequence of red light perception. In Arabidopsis thaliana (Mouse-ear cress), this protein is Dof zinc finger protein DOF3.7 (DOF3.7).